A 379-amino-acid polypeptide reads, in one-letter code: Alcohol dehydrogenase class-3 (379 aa).

Residue alanine 2 is modified to N-acetylalanine. Cysteine 47 serves as a coordination point for Zn(2+). Position 48 (histidine 48) interacts with NAD(+). 2 residues coordinate an alcohol: threonine 49 and histidine 69. Positions 69, 70, 99, 102, 105, 113, and 177 each coordinate Zn(2+). NAD(+) is bound by residues 202–207 (GLGTVG), aspartate 226, lysine 231, isoleucine 272, 295–297 (VGV), 320–322 (TAF), and arginine 372.

Belongs to the zinc-containing alcohol dehydrogenase family. Class-III subfamily. As to quaternary structure, homodimer. The cofactor is Zn(2+). In terms of tissue distribution, ubiquitous.

Its subcellular location is the cytoplasm. It carries out the reaction a primary alcohol + NAD(+) = an aldehyde + NADH + H(+). The catalysed reaction is a secondary alcohol + NAD(+) = a ketone + NADH + H(+). It catalyses the reaction S-(hydroxymethyl)glutathione + NADP(+) = S-formylglutathione + NADPH + H(+). The enzyme catalyses S-(hydroxymethyl)glutathione + NAD(+) = S-formylglutathione + NADH + H(+). It carries out the reaction S-nitrosoglutathione + NADH + H(+) = S-(hydroxysulfenamide)glutathione + NAD(+). With respect to regulation, repressed by thiol-modifying agents N-ethylmaleimide (NEM) and 5,5-dithio-bis-(2-nitrobenzoic acid) (DTNB), as well as by methyl methanethiosulfonate (MMTS) in a dose-dependent manner. Inhibited by hydrogen peroxide H(2)O(2). Its function is as follows. Alcohol dehydrogenase catalyzing the reduction of nitrosoglutathione. Can also use long-chain alcohols including cinnamyl alcohol and geraniol, and, to a lower extent, octanol. Plays a central role in formaldehyde detoxification. Not able to use ethanol (EtOH) as substrate. In Arabidopsis thaliana (Mouse-ear cress), this protein is Alcohol dehydrogenase class-3.